A 1529-amino-acid chain; its full sequence is ABC multidrug transporter AFR2 (1529 aa).

The ABC transporter 1 domain occupies 144–394; the sequence is GSLRDLIGNR…FVDMGFHCPS (251 aa). N-linked (GlcNAc...) asparagine glycans are attached at residues asparagine 235 and asparagine 318. 5 consecutive transmembrane segments (helical) span residues 510-530, 539-559, 589-609, 614-634, and 648-668; these read LFGN…LPVT, ALLF…ILIL, IPYK…MTNL, GAYF…SMLF, and LAPA…AVNV. N-linked (GlcNAc...) asparagine glycosylation occurs at asparagine 742. The chain crosses the membrane as a helical span at residues 757-777; sequence GILIGFFLFFTAIYLTATEFI. The ABC transporter 2 domain occupies 845–1087; that stretch reads FSWKDVVYDI…ILIDYFEKNG (243 aa). ATP is bound at residue 881–888; sequence GVSGAGKT. The next 5 membrane-spanning stretches (helical) occupy residues 1193-1213, 1229-1249, 1268-1288, 1314-1334, and 1353-1373; these read YIWA…FSFF, VFMM…NFVT, IFIL…GVII, LMFL…IMIV, and MCLI…FWVF. An N-linked (GlcNAc...) asparagine glycan is attached at asparagine 1434. Residues 1465 to 1485 traverse the membrane as a helical segment; it reads FGLLWVYVVFNVIAAIGIYWL. Residues 1493–1505 show a composition bias toward basic and acidic residues; it reads GKERASEPEDVQE. Residues 1493-1529 are disordered; the sequence is GKERASEPEDVQEKQVPAQSTEKKYQSISRSSESTVA. Residues 1518-1529 are compositionally biased toward polar residues; that stretch reads QSISRSSESTVA.

This sequence belongs to the ABC transporter superfamily. ABCG family. PDR (TC 3.A.1.205) subfamily.

It is found in the cell membrane. The enzyme catalyses itraconazole(in) + ATP + H2O = itraconazole(out) + ADP + phosphate + H(+). It carries out the reaction voriconazole(in) + ATP + H2O = voriconazole(out) + ADP + phosphate + H(+). The catalysed reaction is fluconazole(in) + ATP + H2O = fluconazole(out) + ADP + phosphate + H(+). Its function is as follows. Pleiotropic ABC efflux transporter that confers resistance to structurally and functionally unrelated compounds including azoles such as fluconazole (FLC), itraconazole (ITC), posaconazole (POS), and voriconazole (VRC). This Cryptococcus deuterogattii (strain R265) (Cryptococcus gattii VGII (strain R265)) protein is ABC multidrug transporter AFR2.